The chain runs to 207 residues: Transcription factor DYT1 (207 aa).

The disordered stretch occupies residues 1–38 (MGGGSRFQEPVRMSRRKQVTKEKEEDENFKSPNLEAER). Residues 28 to 77 (NFKSPNLEAERRRREKLHCRLMALRSHVPIVTNMTKASIVEDAITYIGEL) enclose the bHLH domain.

As to quaternary structure, homodimer. In terms of tissue distribution, mostly expressed in anthers, and, to a lower extent, in young inflorescences undergoing meiosis and siliques.

It is found in the nucleus. Its function is as follows. Transcription factor. Involved in the control of tapetum development. Required for male fertility and pollen differentiation, especially during callose deposition. The sequence is that of Transcription factor DYT1 from Arabidopsis thaliana (Mouse-ear cress).